Consider the following 756-residue polypeptide: 5-methyltetrahydropteroyltriglutamate--homocysteine methyltransferase (756 aa).

5-methyltetrahydropteroyltri-L-glutamate is bound by residues 16-19 (RELK) and Lys112. L-homocysteine contacts are provided by residues 432–434 (IGS) and Glu485. L-methionine is bound by residues 432–434 (IGS) and Glu485. 5-methyltetrahydropteroyltri-L-glutamate contacts are provided by residues 516-517 (RC) and Trp562. Asp600 serves as a coordination point for L-homocysteine. Position 600 (Asp600) interacts with L-methionine. A 5-methyltetrahydropteroyltri-L-glutamate-binding site is contributed by Glu606. Zn(2+) is bound by residues His642, Cys644, and Glu666. His695 functions as the Proton donor in the catalytic mechanism. Cys727 contacts Zn(2+).

Belongs to the vitamin-B12 independent methionine synthase family. The cofactor is Zn(2+).

The enzyme catalyses 5-methyltetrahydropteroyltri-L-glutamate + L-homocysteine = tetrahydropteroyltri-L-glutamate + L-methionine. The protein operates within amino-acid biosynthesis; L-methionine biosynthesis via de novo pathway; L-methionine from L-homocysteine (MetE route): step 1/1. Its function is as follows. Catalyzes the transfer of a methyl group from 5-methyltetrahydrofolate to homocysteine resulting in methionine formation. This chain is 5-methyltetrahydropteroyltriglutamate--homocysteine methyltransferase, found in Haemophilus influenzae (strain PittEE).